Here is a 400-residue protein sequence, read N- to C-terminus: Large envelope protein (400 aa).

Disordered regions lie at residues 1–50 and 84–116; these read MGGW…PHKD and ILTSVPAAPPPASTNRQSGRQPTPLSPPLRDTH. G2 carries the N-myristoyl glycine; by host lipid modification. Residues 2–119 are pre-S1; that stretch reads GGWSSKPRKG…PPLRDTHPQA (118 aa). The pre-S stretch occupies residues 2–174; sequence GGWSSKPRKG…LSTTGDPVPN (173 aa). Over 2 to 181 the chain is Virion surface; in external conformation; the sequence is GGWSSKPRKG…VPNMENIASG (180 aa). Topologically, residues 2–253 are intravirion; in internal conformation; that stretch reads GGWSSKPRKG…PGYRWMCLRR (252 aa). Residues 96 to 106 are compositionally biased toward polar residues; it reads STNRQSGRQPT. The tract at residues 120 to 174 is pre-S2; it reads VQWNSTTFHQTLQDPRVRALYLPAGGSSSGTVSPAQNTVSAISSILSTTGDPVPN. Residues 182-202 form a helical membrane-spanning segment; the sequence is LLGPLLVLQAGFFSLTKILTI. Topologically, residues 203–253 are intravirion; in external conformation; sequence PQSLDSWWTSLNFLGGTPVCLGQNSQSQISSHSPTCCPPICPGYRWMCLRR. A helical transmembrane segment spans residues 254 to 274; that stretch reads FIIFLCILLLCLIFLLVLLDY. Over 275 to 348 the chain is Virion surface; that stretch reads QGMLPVCPLI…WASVRFSWLS (74 aa). N-linked (GlcNAc...) asparagine; by host glycosylation occurs at N320. The chain crosses the membrane as a helical span at residues 349 to 369; that stretch reads LLVPFVQWFVGLSPTVWLSVI. The Intravirion portion of the chain corresponds to 370-375; sequence WMMWFW. Residues 376–398 traverse the membrane as a helical segment; it reads GPSLYNILSPFMPLLPIFLCLWV. At 399–400 the chain is on the virion surface side; that stretch reads YM.

It belongs to the orthohepadnavirus major surface antigen family. In terms of assembly, li-HBsAg interacts with capsid protein and with HDV Large delta antigen. Isoform M associates with host chaperone CANX through its pre-S2 N glycan. This association may be essential for M proper secretion. Interacts (via its myristoylated pre-S1 region) with the host SLC10A1/NTCP; this interaction is essential for viral entry. Post-translationally, isoform M is N-terminally acetylated by host at a ratio of 90%, and N-glycosylated by host at the pre-S2 region. In terms of processing, myristoylated; this modification is essential for its interaction with the host protein SLC10A1/NTCP.

The protein resides in the virion membrane. The large envelope protein exists in two topological conformations, one which is termed 'external' or Le-HBsAg and the other 'internal' or Li-HBsAg. In its external conformation the protein attaches the virus to cell receptors and thereby initiating infection. This interaction determines the species specificity and liver tropism. This attachment induces virion internalization predominantly through caveolin-mediated endocytosis. The large envelope protein also assures fusion between virion membrane and endosomal membrane. In its internal conformation the protein plays a role in virion morphogenesis and mediates the contact with the nucleocapsid like a matrix protein. Its function is as follows. The middle envelope protein plays an important role in the budding of the virion. It is involved in the induction of budding in a nucleocapsid independent way. In this process the majority of envelope proteins bud to form subviral lipoprotein particles of 22 nm of diameter that do not contain a nucleocapsid. The sequence is that of Large envelope protein from Homo sapiens (Human).